Reading from the N-terminus, the 200-residue chain is Large ribosomal subunit protein uL4 (200 aa).

The disordered stretch occupies residues 38 to 72; it reads GRQGTKQQKTRSDVAGGGKRPWRQKGTGRARAGTT.

This sequence belongs to the universal ribosomal protein uL4 family. Part of the 50S ribosomal subunit.

In terms of biological role, one of the primary rRNA binding proteins, this protein initially binds near the 5'-end of the 23S rRNA. It is important during the early stages of 50S assembly. It makes multiple contacts with different domains of the 23S rRNA in the assembled 50S subunit and ribosome. Functionally, forms part of the polypeptide exit tunnel. The protein is Large ribosomal subunit protein uL4 of Pseudomonas entomophila (strain L48).